The following is an 880-amino-acid chain: Leucine--tRNA ligase (880 aa).

Residues 46–56 (PYPSGALHMGH) carry the 'HIGH' region motif. A 'KMSKS' region motif is present at residues 638 to 642 (KMSKS). Position 641 (lysine 641) interacts with ATP.

This sequence belongs to the class-I aminoacyl-tRNA synthetase family.

The protein resides in the cytoplasm. It carries out the reaction tRNA(Leu) + L-leucine + ATP = L-leucyl-tRNA(Leu) + AMP + diphosphate. This is Leucine--tRNA ligase from Stenotrophomonas maltophilia (strain K279a).